Consider the following 67-residue polypeptide: Phycobilisome 7.8 kDa linker polypeptide, allophycocyanin-associated, core (67 aa).

Residues 1–56 enclose the CpcD-like domain; the sequence is MRMFKITACVPSQTRIRTQRELQNTYFTKLVPYENWFREQQRIQKMGGKIVKVELF.

This sequence belongs to the phycobilisome linker protein family.

It is found in the cellular thylakoid membrane. Functionally, rod linker protein, associated with allophycocyanin. Linker polypeptides determine the state of aggregation and the location of the disk-shaped phycobiliprotein units within the phycobilisome and modulate their spectroscopic properties in order to mediate a directed and optimal energy transfer. In Thermosynechococcus vestitus (strain NIES-2133 / IAM M-273 / BP-1), this protein is Phycobilisome 7.8 kDa linker polypeptide, allophycocyanin-associated, core (apcC).